A 441-amino-acid chain; its full sequence is Deoxyguanosinetriphosphate triphosphohydrolase-like protein (441 aa).

Residues 1 to 27 (MTSSVWQERRHGEDKQRRNDHRSPYQR) are disordered. The span at 7 to 27 (QERRHGEDKQRRNDHRSPYQR) shows a compositional bias: basic and acidic residues. The region spanning 59–252 (RLTHSLEVSQ…MELADDIAYA (194 aa)) is the HD domain.

This sequence belongs to the dGTPase family. Type 2 subfamily.

The sequence is that of Deoxyguanosinetriphosphate triphosphohydrolase-like protein from Shewanella oneidensis (strain ATCC 700550 / JCM 31522 / CIP 106686 / LMG 19005 / NCIMB 14063 / MR-1).